Consider the following 265-residue polypeptide: Silaffin-1 (265 aa).

A signal peptide spans 1–19 (MKLTAIFPLLFTAVGYCAA). Positions 20–107 (QSIADLAAAN…DSEEEELRIL (88 aa)) are cleaved as a propeptide — acidic. Residues 37 to 106 (SAQLISADSS…EDSEEEELRI (70 aa)) are disordered. Positions 51–90 (DSSVESVDAASSDVSGSSVESVDVSGSSLESVDVSGSSLE) are enriched in low complexity. Residues 91–103 (SVDDSSEDSEEEE) are compositionally biased toward acidic residues. Residues 108 to 140 (SSKKSGSYYSYGTKKSGSYSGYSTKKSASRRIL) form an R1; atypical repeat. A 7 X 19 AA repeat of S-S-K-K-S-G-S-Y-S-G-S-K-G-S-K-R-R-[IL]-L region spans residues 108 to 257 (SSKKSGSYYS…GSKGSKRRIL (150 aa)). Position 110 is an N6-poly(methylaminopropyl)lysine (Lys110). Lys111 is subject to N6,N6-dimethyllysine. Low complexity predominate over residues 122–133 (KSGSYSGYSTKK). Positions 122 to 265 (KSGSYSGYST…ILSGGLRGSM (144 aa)) are disordered. The propeptide occupies 137–140 (RRIL). The stretch at 141–162 (SSKKSGSYSGYSTKKSGSRRIL) is one R2; atypical repeat. Low complexity predominate over residues 142 to 155 (SKKSGSYSGYSTKK). Lys143 is modified (N6-poly(methylaminopropyl)lysine). Lys144 is subject to N6,N6-dimethyllysine. Residue Lys154 is modified to N6-poly(methylaminopropyl)lysine. Residue Lys155 is modified to N6,N6-dimethyllysine. A propeptide spanning residues 159–162 (RRIL) is cleaved from the precursor. Phosphoserine occurs at positions 163 and 164. The R3 repeat unit spans residues 163-181 (SSKKSGSYSGSKGSKRRIL). Positions 164-174 (SKKSGSYSGSK) are enriched in low complexity. Lys165 carries the post-translational modification N6-poly(methylaminopropyl)lysine. Position 166 is an N6,N6-dimethyllysine (Lys166). Phosphoserine occurs at positions 167, 169, 171, and 173. The residue at position 174 (Lys174) is an N6,N6,N6-trimethyl-5-hydroxylysine. Ser176 is subject to Phosphoserine. Lys177 bears the N6-poly(methylaminopropyl)lysine mark. A propeptide spanning residues 178 to 181 (RRIL) is cleaved from the precursor. Ser182 and Ser183 each carry phosphoserine. The R4 repeat unit spans residues 182–200 (SSKKSGSYSGSKGSKRRNL). The span at 183–193 (SKKSGSYSGSK) shows a compositional bias: low complexity. Lys184 carries the post-translational modification N6-poly(methylaminopropyl)lysine. Residue Lys185 is modified to N6,N6-dimethyllysine. Phosphoserine is present on residues Ser186, Ser188, Ser190, and Ser192. The residue at position 193 (Lys193) is an N6,N6,N6-trimethyl-5-hydroxylysine. At Ser195 the chain carries Phosphoserine. Lys196 carries the post-translational modification N6-poly(methylaminopropyl)lysine. Positions 197–200 (RRNL) are excised as a propeptide. 2 positions are modified to phosphoserine: Ser201 and Ser202. The stretch at 201–219 (SSKKSGSYSGSKGSKRRIL) is one R5 repeat. Residues 202–212 (SKKSGSYSGSK) are compositionally biased toward low complexity. Lys203 bears the N6-poly(methylaminopropyl)lysine mark. Lys204 is modified (N6,N6-dimethyllysine). Phosphoserine occurs at positions 205, 207, 209, and 211. The residue at position 212 (Lys212) is an N6,N6,N6-trimethyl-5-hydroxylysine. Position 214 is a phosphoserine (Ser214). The residue at position 215 (Lys215) is an N6-poly(methylaminopropyl)lysine. The propeptide occupies 216–219 (RRIL). Ser220 and Ser221 each carry phosphoserine. The stretch at 220-238 (SSKKSGSYSGSKGSKRRNL) is one R6 repeat. Positions 221-231 (SKKSGSYSGSK) are enriched in low complexity. Lys222 carries the post-translational modification N6-poly(methylaminopropyl)lysine. Residue Lys223 is modified to N6,N6-dimethyllysine. Ser224, Ser226, Ser228, and Ser230 each carry phosphoserine. The residue at position 231 (Lys231) is an N6,N6,N6-trimethyl-5-hydroxylysine. Ser233 is subject to Phosphoserine. Lys234 is modified (N6-poly(methylaminopropyl)lysine). Residues 235 to 238 (RRNL) constitute a propeptide that is removed on maturation. 2 positions are modified to phosphoserine: Ser239 and Ser240. The R7 repeat unit spans residues 239–257 (SSKKSGSYSGSKGSKRRIL). Over residues 240 to 250 (SKKSGSYSGSK) the composition is skewed to low complexity. Lys241 carries the N6-poly(methylaminopropyl)lysine modification. Position 242 is an N6,N6-dimethyllysine (Lys242). 4 positions are modified to phosphoserine: Ser243, Ser245, Ser247, and Ser249. Lys250 is modified (N6,N6,N6-trimethyl-5-hydroxylysine). The residue at position 252 (Ser252) is a Phosphoserine. Lys253 is modified (N6-poly(methylaminopropyl)lysine). A propeptide spanning residues 254–265 (RRILSGGLRGSM) is cleaved from the precursor.

In terms of assembly, silaffin-1A peptides form large aggregates via electrostatic interactions due to intermolecular interactions between the negatively charged phosphate groups and the polyamine moieties. Post-translationally, N6-polymethylaminopropylated. Two lysine residues of each peptide bears 6 to 11 repeats of methyl-propylamine, which gives a possible template for nucleation, and may also control the silica colloid size within the silica deposition vesicle (SDV). Phosphorylated. All serine residues of the Silaffin-1A1 peptide are phosphorylated. Only minor amounts of the Silaffin-1A2 peptide are phosphorylated. Phosphorylation is essential for the activity. It may represent a source of anions required for silica formation of diatoms.

Functionally, catalyzes the polymerization of silica spheres from a silicilic acid solution. It therefore plays a central role in the formation of silica cell wall of diatoms. The chain is Silaffin-1 (SIL1) from Cylindrotheca fusiformis (Marine diatom).